The following is a 339-amino-acid chain: Ribosome biogenesis protein BRX1 homolog (339 aa).

The interval 1-34 (MSAYKRKRGSLPEVATNTKKAKKQLAGSEQEATA) is disordered. The region spanning 53 to 242 (ERVLIFSSRG…LIKIFKGSFG (190 aa)) is the Brix domain. Residues 304-339 (AEEKPQVIETEPPAPKPKMKRKDKQFKRQRMAKKRM) are disordered. A compositionally biased stretch (basic residues) spans 320–339 (PKMKRKDKQFKRQRMAKKRM).

Belongs to the BRX1 family. In terms of tissue distribution, ubiquitous.

It localises to the nucleus. Its subcellular location is the nucleolus. Required for biogenesis of the 60S ribosomal subunit. This Xenopus laevis (African clawed frog) protein is Ribosome biogenesis protein BRX1 homolog (brix1).